The chain runs to 123 residues: Large ribosomal subunit protein bL19c (123 aa).

It belongs to the bacterial ribosomal protein bL19 family.

The protein resides in the plastid. It is found in the chloroplast. The polypeptide is Large ribosomal subunit protein bL19c (Pyropia yezoensis (Susabi-nori)).